The following is a 328-amino-acid chain: uncharacterized protein (328 aa).

Residues 1–25 form the signal peptide; sequence MKLFNFKKLSMLIAGFTLVTSPALA.

The protein belongs to the bacterial solute-binding protein 7 family.

The protein localises to the periplasm. This is an uncharacterized protein from Haemophilus influenzae (strain ATCC 51907 / DSM 11121 / KW20 / Rd).